A 418-amino-acid polypeptide reads, in one-letter code: Serine hydroxymethyltransferase (418 aa).

(6S)-5,6,7,8-tetrahydrofolate-binding positions include L121 and 125–127 (GHL). N6-(pyridoxal phosphate)lysine is present on K230. A (6S)-5,6,7,8-tetrahydrofolate-binding site is contributed by 355-357 (SPF).

The protein belongs to the SHMT family. Homodimer. The cofactor is pyridoxal 5'-phosphate.

It localises to the cytoplasm. It carries out the reaction (6R)-5,10-methylene-5,6,7,8-tetrahydrofolate + glycine + H2O = (6S)-5,6,7,8-tetrahydrofolate + L-serine. It functions in the pathway one-carbon metabolism; tetrahydrofolate interconversion. Its pathway is amino-acid biosynthesis; glycine biosynthesis; glycine from L-serine: step 1/1. Functionally, catalyzes the reversible interconversion of serine and glycine with tetrahydrofolate (THF) serving as the one-carbon carrier. This reaction serves as the major source of one-carbon groups required for the biosynthesis of purines, thymidylate, methionine, and other important biomolecules. Also exhibits THF-independent aldolase activity toward beta-hydroxyamino acids, producing glycine and aldehydes, via a retro-aldol mechanism. This Streptococcus pyogenes serotype M6 (strain ATCC BAA-946 / MGAS10394) protein is Serine hydroxymethyltransferase.